The sequence spans 411 residues: LL-diaminopimelate aminotransferase (411 aa).

Tyr15 and Gly42 together coordinate substrate. Pyridoxal 5'-phosphate contacts are provided by residues Tyr72, 108-109 (SK), Tyr132, Asn187, Tyr218, and 246-248 (SFS). Substrate contacts are provided by Lys109, Tyr132, and Asn187. Residue Lys249 is modified to N6-(pyridoxal phosphate)lysine. Residues Arg257 and Asn292 each contribute to the pyridoxal 5'-phosphate site. Positions 292 and 388 each coordinate substrate.

Belongs to the class-I pyridoxal-phosphate-dependent aminotransferase family. LL-diaminopimelate aminotransferase subfamily. As to quaternary structure, homodimer. Requires pyridoxal 5'-phosphate as cofactor.

It catalyses the reaction (2S,6S)-2,6-diaminopimelate + 2-oxoglutarate = (S)-2,3,4,5-tetrahydrodipicolinate + L-glutamate + H2O + H(+). It participates in amino-acid biosynthesis; L-lysine biosynthesis via DAP pathway; LL-2,6-diaminopimelate from (S)-tetrahydrodipicolinate (aminotransferase route): step 1/1. Functionally, involved in the synthesis of meso-diaminopimelate (m-DAP or DL-DAP), required for both lysine and peptidoglycan biosynthesis. Catalyzes the direct conversion of tetrahydrodipicolinate to LL-diaminopimelate. The polypeptide is LL-diaminopimelate aminotransferase (Nostoc punctiforme (strain ATCC 29133 / PCC 73102)).